A 472-amino-acid chain; its full sequence is CAAX prenyl protease 1 homolog (472 aa).

Residues 1-8 (MDVGGALD) lie on the Lumenal side of the membrane. A helical membrane pass occupies residues 9–29 (LYGCSVNVYNAILIFIWVLFL). At 30–75 (WETYINLRQLKVAKRVTESPEEIKCLMNDVDFDKSRRYAIDKMNFD) the chain is on the cytoplasmic side. A helical membrane pass occupies residues 76–96 (IVSGFYNILSLSAVLYFQLIA). Residues 97-124 (WAWHKSQEHMLFVCSYAPRSFGTTEGSE) lie on the Lumenal side of the membrane. The chain crosses the membrane as a helical span at residues 125 to 145 (ILFSLLFTVYVALFQFFESLP). The Cytoplasmic segment spans residues 146–175 (WSYYRHFVIEERYGFNKQTIGFFIKDRLKS). The chain crosses the membrane as a helical span at residues 176 to 196 (LAVGLVIGLPIISMLVWIIKA). Over 197 to 207 (GGHYFYIYAYG) the chain is Lumenal. The helical transmembrane segment at 208-228 (FTFVVSFIIMFIYPEFIAPIF) threads the bilayer. At 229-340 (DRYEHFPDCE…LGHWKLKHMT (112 aa)) the chain is on the cytoplasmic side. His329 lines the Zn(2+) pocket. Glu330 is an active-site residue. His333 serves as a coordination point for Zn(2+). A helical membrane pass occupies residues 341–361 (FNLIIAQINIFFMFFAFGQLI). Topologically, residues 362 to 382 (NVDQLFVDFGFPPSTAPILIR) are lumenal. Residues 383–403 (LIVVFQFIFMPYSSVLEFLMT) traverse the membrane as a helical segment. At 404–472 (MLSRKFEFQA…AIDAKMGKEK (69 aa)) the chain is on the cytoplasmic side. A Zn(2+)-binding site is contributed by Glu410. Asp414 (proton donor) is an active-site residue.

This sequence belongs to the peptidase M48A family. In terms of assembly, homodimer; disulfide-linked. Zn(2+) is required as a cofactor.

The protein resides in the endoplasmic reticulum membrane. The catalysed reaction is Hydrolyzes the peptide bond -P2-(S-farnesyl or geranylgeranyl)C-P1'-P2'-P3'-COOH where P1' and P2' are amino acids with aliphatic side chains and P3' is any C-terminal residue.. Its activity is regulated as follows. Inhibited by ethylenediaminetetraacetic acid (EDTA) but not by serine, aspartic or cysteine protease inhibitors. Inhibited by high concentration of Zn(2+) (&gt; 0.1 mM). Functionally, zinc-dependent metalloproteinase. Proteolytically removes the C-terminal three residues of farnesylated proteins. The polypeptide is CAAX prenyl protease 1 homolog (Taenia solium (Pork tapeworm)).